The primary structure comprises 293 residues: Tyrosine recombinase XerD (293 aa).

Residues 1 to 83 (MHGLIADFIH…ALRKFYRFLL (83 aa)) form the Core-binding (CB) domain. In terms of domain architecture, Tyr recombinase spans 104–287 (HLPATLSGTE…SNQHLVAVYH (184 aa)). Residues Arg144, Lys168, His239, Arg242, and His265 contribute to the active site. Residue Tyr274 is the O-(3'-phospho-DNA)-tyrosine intermediate of the active site.

Belongs to the 'phage' integrase family. XerD subfamily. In terms of assembly, forms a cyclic heterotetrameric complex composed of two molecules of XerC and two molecules of XerD.

The protein resides in the cytoplasm. In terms of biological role, site-specific tyrosine recombinase, which acts by catalyzing the cutting and rejoining of the recombining DNA molecules. The XerC-XerD complex is essential to convert dimers of the bacterial chromosome into monomers to permit their segregation at cell division. It also contributes to the segregational stability of plasmids. The protein is Tyrosine recombinase XerD of Lacticaseibacillus casei (Lactobacillus casei).